Reading from the N-terminus, the 335-residue chain is Tetraacyldisaccharide 4'-kinase (335 aa).

59-66 (TAGGNGKT) is a binding site for ATP.

The protein belongs to the LpxK family.

The enzyme catalyses a lipid A disaccharide + ATP = a lipid IVA + ADP + H(+). It participates in glycolipid biosynthesis; lipid IV(A) biosynthesis; lipid IV(A) from (3R)-3-hydroxytetradecanoyl-[acyl-carrier-protein] and UDP-N-acetyl-alpha-D-glucosamine: step 6/6. Its function is as follows. Transfers the gamma-phosphate of ATP to the 4'-position of a tetraacyldisaccharide 1-phosphate intermediate (termed DS-1-P) to form tetraacyldisaccharide 1,4'-bis-phosphate (lipid IVA). This chain is Tetraacyldisaccharide 4'-kinase, found in Aliivibrio salmonicida (strain LFI1238) (Vibrio salmonicida (strain LFI1238)).